Reading from the N-terminus, the 102-residue chain is Small ribosomal subunit protein uS10 (102 aa).

This sequence belongs to the universal ribosomal protein uS10 family. In terms of assembly, part of the 30S ribosomal subunit.

Functionally, involved in the binding of tRNA to the ribosomes. This is Small ribosomal subunit protein uS10 from Thermoanaerobacter pseudethanolicus (strain ATCC 33223 / 39E) (Clostridium thermohydrosulfuricum).